A 177-amino-acid chain; its full sequence is PLAC8-like protein 1 (177 aa).

This sequence belongs to the cornifelin family.

In Homo sapiens (Human), this protein is PLAC8-like protein 1 (PLAC8L1).